Here is a 273-residue protein sequence, read N- to C-terminus: Neuferricin (273 aa).

The first 22 residues, 1 to 22 (MLGYLAAAALCLAAVLLMRLDH), serve as a signal peptide directing secretion. A Cytochrome b5 heme-binding domain is found at 44–143 (GRLMSKEELS…QNYITIGKLT (100 aa)).

It belongs to the cytochrome b5 family. MAPR subfamily.

It is found in the secreted. Heme-binding protein which promotes neuronal but not astrocyte differentiation. The chain is Neuferricin (cyb5d2) from Xenopus tropicalis (Western clawed frog).